The chain runs to 973 residues: Serine/threonine-protein kinase atg1 (973 aa).

The region spanning 23 to 328 (YTRLDEIGRG…FPDFFQNGVI (306 aa)) is the Protein kinase domain. Residues 29-37 (IGRGSFATV) and K52 contribute to the ATP site. Residue D166 is the Proton acceptor of the active site. Disordered regions lie at residues 338-446 (DDLP…PGRQ), 460-482 (RQKG…DKLR), 523-587 (GNIS…QSPT), and 949-973 (PTPS…TPPK). Over residues 387–407 (GLTQRPPSQNQRFGTPQTTTP) the composition is skewed to polar residues. The span at 523 to 537 (GNISRGAQTGALSRR) shows a compositional bias: polar residues. The span at 566 to 582 (SRADSMHNRQGSYERRY) shows a compositional bias: basic and acidic residues. Residues 951-965 (PSANVPSKMASSNPV) show a composition bias toward polar residues.

The protein belongs to the protein kinase superfamily. Ser/Thr protein kinase family. APG1/unc-51/ULK1 subfamily. Homodimer. Forms a ternary complex with ATG13 and ATG17.

Its subcellular location is the cytoplasm. It is found in the preautophagosomal structure membrane. It catalyses the reaction L-seryl-[protein] + ATP = O-phospho-L-seryl-[protein] + ADP + H(+). The catalysed reaction is L-threonyl-[protein] + ATP = O-phospho-L-threonyl-[protein] + ADP + H(+). Its function is as follows. Serine/threonine protein kinase involved in the cytoplasm to vacuole transport (Cvt) and found to be essential in autophagy, where it is required for the formation of autophagosomes. Involved in the clearance of protein aggregates which cannot be efficiently cleared by the proteasome. Required for selective autophagic degradation of the nucleus (nucleophagy) as well as for mitophagy which contributes to regulate mitochondrial quantity and quality by eliminating the mitochondria to a basal level to fulfill cellular energy requirements and preventing excess ROS production. Also involved in endoplasmic reticulum-specific autophagic process, in selective removal of ER-associated degradation (ERAD) substrates. Plays a key role in ATG9 and ATG23 cycling through the pre-autophagosomal structure and is necessary to promote ATG18 binding to ATG9 through phosphorylation of ATG9. Catalyzes phosphorylation of ATG4, decreasing the interaction between ATG4 and ATG8 and impairing deconjugation of PE-conjugated forms of ATG8. The polypeptide is Serine/threonine-protein kinase atg1 (Aspergillus fumigatus (strain ATCC MYA-4609 / CBS 101355 / FGSC A1100 / Af293) (Neosartorya fumigata)).